Consider the following 504-residue polypeptide: Cytochrome P450 2D1 (504 aa).

Cys446 contacts heme.

Belongs to the cytochrome P450 family. Heme is required as a cofactor.

The protein resides in the endoplasmic reticulum membrane. Its subcellular location is the microsome membrane. It carries out the reaction an organic molecule + reduced [NADPH--hemoprotein reductase] + O2 = an alcohol + oxidized [NADPH--hemoprotein reductase] + H2O + H(+). Its function is as follows. Cytochromes P450 are a group of heme-thiolate monooxygenases. In liver microsomes, this enzyme is involved in an NADPH-dependent electron transport pathway. It oxidizes a variety of structurally unrelated compounds, including steroids, fatty acids, and xenobiotics. This is Cytochrome P450 2D1 (Cyp2d1) from Rattus norvegicus (Rat).